The primary structure comprises 413 residues: Multifunctional CCA protein (413 aa).

ATP is bound by residues G8 and R11. G8 and R11 together coordinate CTP. 2 residues coordinate Mg(2+): D21 and D23. The ATP site is built by R91, R141, and R144. CTP contacts are provided by R91, R141, and R144. Residues 230–331 (TGAHLLLVLD…VRLLERCDAL (102 aa)) form the HD domain.

Belongs to the tRNA nucleotidyltransferase/poly(A) polymerase family. Bacterial CCA-adding enzyme type 1 subfamily. In terms of assembly, monomer. Can also form homodimers and oligomers. Mg(2+) serves as cofactor. The cofactor is Ni(2+).

The catalysed reaction is a tRNA precursor + 2 CTP + ATP = a tRNA with a 3' CCA end + 3 diphosphate. It catalyses the reaction a tRNA with a 3' CCA end + 2 CTP + ATP = a tRNA with a 3' CCACCA end + 3 diphosphate. Its function is as follows. Catalyzes the addition and repair of the essential 3'-terminal CCA sequence in tRNAs without using a nucleic acid template. Adds these three nucleotides in the order of C, C, and A to the tRNA nucleotide-73, using CTP and ATP as substrates and producing inorganic pyrophosphate. tRNA 3'-terminal CCA addition is required both for tRNA processing and repair. Also involved in tRNA surveillance by mediating tandem CCA addition to generate a CCACCA at the 3' terminus of unstable tRNAs. While stable tRNAs receive only 3'-terminal CCA, unstable tRNAs are marked with CCACCA and rapidly degraded. The chain is Multifunctional CCA protein from Verminephrobacter eiseniae (strain EF01-2).